An 835-amino-acid polypeptide reads, in one-letter code: Adhesion G protein-coupled receptor E5 (835 aa).

A signal peptide spans 1 to 20; it reads MGGRVFLAFCVWLTLPGAET. The Extracellular segment spans residues 21–552; that stretch reads QDSRGCARWC…EDWKLTLITR (532 aa). Residues 22-63 form the EGF-like 1 domain; the sequence is DSRGCARWCPQNSSCVNATACRCNPGFSSFSEIITTPTETCD. 15 disulfides stabilise this stretch: Cys-26-Cys-36, Cys-30-Cys-42, Cys-44-Cys-62, Cys-68-Cys-82, Cys-76-Cys-91, Cys-93-Cys-114, Cys-120-Cys-133, Cys-127-Cys-142, Cys-144-Cys-158, Cys-164-Cys-177, Cys-171-Cys-186, Cys-188-Cys-207, Cys-213-Cys-226, Cys-220-Cys-235, and Cys-237-Cys-256. N-linked (GlcNAc...) asparagine glycans are attached at residues Asn-33 and Asn-38. The EGF-like 2; calcium-binding domain maps to 64–115; it reads DINECATPSKVSCGKFSDCWNTEGSYDCVCSPGYEPVSGAKTFKNESENTCQ. N-linked (GlcNAc...) asparagine glycosylation occurs at Asn-108. An EGF-like 3; calcium-binding domain is found at 116-159; the sequence is DVDECQQNPRLCKSYGTCVNTLGSYTCQCLPGFKFIPEDPKVCT. In terms of domain architecture, EGF-like 4; calcium-binding spans 160–208; it reads DVNECTSGQNPCHSSTHCLNNVGSYQCRCRPGWQPIPGSPNGPNNTVCE. The N-linked (GlcNAc...) asparagine glycan is linked to Asn-203. Residues 209-257 form the EGF-like 5; calcium-binding domain; sequence DVDECSSGQHQCDSSTVCFNTVGSYSCRCRPGWKPRHGIPNNQKDTVCE. The 195-residue stretch at 349-543 folds into the GAIN-B domain; sequence PFTYISPSNT…AILMAHYDVE (195 aa). N-linked (GlcNAc...) asparagine glycosylation is found at Asn-371, Asn-406, Asn-413, Asn-453, and Asn-520. 2 cysteine pairs are disulfide-bonded: Cys-495-Cys-525 and Cys-513-Cys-527. The segment at 495–543 is GPS; that stretch reads CAFWKSDSDRGGHWATEGCQVLGSKNGSTTCQCSHLSSFAILMAHYDVE. The chain crosses the membrane as a helical span at residues 553 to 572; that stretch reads VGLALSLFCLLLCILTFLLV. Topologically, residues 573-581 are cytoplasmic; that stretch reads RPIQGSRTT. Residues 582 to 601 traverse the membrane as a helical segment; sequence IHLHLCICLFVGSTIFLAGI. Residues 602 to 620 lie on the Extracellular side of the membrane; it reads ENEGGQVGLRCRLVAGLLH. The helical transmembrane segment at 621–642 threads the bilayer; the sequence is YCFLAAFCWMSLEGLELYFLVV. At 643–653 the chain is on the cytoplasmic side; it reads RVFQGQGLSTR. Residues 654 to 674 traverse the membrane as a helical segment; that stretch reads WLCLIGYGVPLLIVGVSAAIY. Residues 675-691 are Extracellular-facing; it reads SKGYGRPRYCWLDFEQG. A helical transmembrane segment spans residues 692–712; that stretch reads FLWSFLGPVTFIILCNAVIFV. Residues 713-739 lie on the Cytoplasmic side of the membrane; sequence TTVWKLTQKFSEINPDMKKLKKARALT. The chain crosses the membrane as a helical span at residues 740-760; the sequence is ITAIAQLFLLGCTWVFGLFIF. Residues 761–766 are Extracellular-facing; sequence DDRSLV. A helical membrane pass occupies residues 767-789; it reads LTYVFTILNCLQGAFLYLLHCLL. Topologically, residues 790-835 are cytoplasmic; the sequence is NKKVREEYRKWACLVAGGSKYSEFTSTTSGTGHNQTRALRASESGI. A compositionally biased stretch (polar residues) spans 814–826; it reads TSTTSGTGHNQTR. Positions 814 to 835 are disordered; the sequence is TSTTSGTGHNQTRALRASESGI. A Phosphoserine modification is found at Ser-815. Phosphothreonine is present on Thr-816. Ser-818 is modified (phosphoserine). Thr-825 carries the phosphothreonine modification. Residues Ser-831 and Ser-833 each carry the phosphoserine modification.

The protein belongs to the G-protein coupled receptor 2 family. LN-TM7 subfamily. As to quaternary structure, forms a heterodimer, consisting of a large extracellular region (alpha subunit) non-covalently linked to a seven-transmembrane moiety (beta subunit). Interacts with complement decay-accelerating factor (DAF). The largest isoform (isoform 1) interacts with chondroitin sulfate. Proteolytically cleaved into 2 subunits, an extracellular alpha subunit and a seven-transmembrane subunit. As to expression, broadly expressed, found on most hematopoietic cells, including activated lymphocytes, monocytes, macrophages, dendritic cells, and granulocytes. Expressed also abundantly by smooth muscle cells. Expressed in thyroid, colorectal, gastric, esophageal and pancreatic carcinomas too. Expression are increased under inflammatory conditions in the CNS of multiple sclerosis and in synovial tissue of patients with rheumatoid arthritis. Increased expression of CD97 in the synovium is accompanied by detectable levels of soluble CD97 in the synovial fluid.

Its subcellular location is the cell membrane. The protein resides in the secreted. The protein localises to the extracellular space. Receptor potentially involved in both adhesion and signaling processes early after leukocyte activation. Plays an essential role in leukocyte migration. This chain is Adhesion G protein-coupled receptor E5, found in Homo sapiens (Human).